The following is a 131-amino-acid chain: Histone H2B.1 (131 aa).

Over residues methionine 1–proline 20 the composition is skewed to basic and acidic residues. A disordered region spans residues methionine 1 to lysine 39. 2 positions are modified to N6-acetyllysine; alternate: lysine 8 and lysine 9. Glycyl lysine isopeptide (Lys-Gly) (interchain with G-Cter in SUMO); alternate cross-links involve residues lysine 8 and lysine 9. The residue at position 12 (serine 12) is a Phosphoserine. Position 13 is an N6-acetyllysine (lysine 13). Position 18 is an N6-acetyllysine; alternate (lysine 18). Lysine 18 participates in a covalent cross-link: Glycyl lysine isopeptide (Lys-Gly) (interchain with G-Cter in SUMO); alternate. Lysine 19 is covalently cross-linked (Glycyl lysine isopeptide (Lys-Gly) (interchain with G-Cter in SUMO)). A Glycyl lysine isopeptide (Lys-Gly) (interchain with G-Cter in ubiquitin) cross-link involves residue lysine 125.

This sequence belongs to the histone H2B family. The nucleosome is a histone octamer containing two molecules each of H2A, H2B, H3 and H4 assembled in one H3-H4 heterotetramer and two H2A-H2B heterodimers. The octamer wraps approximately 147 bp of DNA. Post-translationally, monoubiquitinated to form H2BK123ub1. H2BK123ub1 gives a specific tag for epigenetic transcriptional activation and is also prerequisite for H3K4me and H3K79me formation. H2BK123ub1 also modulates the formation of double-strand breaks during meiosis and is a prerequisite for DNA-damage checkpoint activation. In terms of processing, phosphorylated by STE20 to form H2BS10ph during progression through meiotic prophase. May be correlated with chromosome condensation. Acetylated by GCN5 to form H2BK11ac and H2BK16ac. H2BK16ac can also be formed by ESA1. Acetylation of N-terminal lysines and particularly formation of H2BK11acK16ac has a positive effect on transcription. Post-translationally, sumoylation to form H2BK6su or H2BK7su, and probably also H2BK16su or H2BK17su, occurs preferentially near the telomeres and represses gene transcription.

It localises to the nucleus. The protein localises to the chromosome. Functionally, core component of nucleosome. Nucleosomes wrap and compact DNA into chromatin, limiting DNA accessibility to the cellular machineries which require DNA as a template. Histones thereby play a central role in transcription regulation, DNA repair, DNA replication and chromosomal stability. DNA accessibility is regulated via a complex set of post-translational modifications of histones, also called histone code, and nucleosome remodeling. The chain is Histone H2B.1 (HTB1) from Scheffersomyces stipitis (strain ATCC 58785 / CBS 6054 / NBRC 10063 / NRRL Y-11545) (Yeast).